The following is a 338-amino-acid chain: Ketol-acid reductoisomerase (NADP(+)) (338 aa).

A KARI N-terminal Rossmann domain is found at I3–T183. NADP(+)-binding positions include Y26–Q29, R49, S52, S54, and D84–Q87. H109 is a catalytic residue. NADP(+) is bound at residue G135. Positions T184–V329 constitute a KARI C-terminal knotted domain. D192, E196, E228, and E232 together coordinate Mg(2+). S253 serves as a coordination point for substrate.

The protein belongs to the ketol-acid reductoisomerase family. It depends on Mg(2+) as a cofactor.

It carries out the reaction (2R)-2,3-dihydroxy-3-methylbutanoate + NADP(+) = (2S)-2-acetolactate + NADPH + H(+). The catalysed reaction is (2R,3R)-2,3-dihydroxy-3-methylpentanoate + NADP(+) = (S)-2-ethyl-2-hydroxy-3-oxobutanoate + NADPH + H(+). The protein operates within amino-acid biosynthesis; L-isoleucine biosynthesis; L-isoleucine from 2-oxobutanoate: step 2/4. It participates in amino-acid biosynthesis; L-valine biosynthesis; L-valine from pyruvate: step 2/4. In terms of biological role, involved in the biosynthesis of branched-chain amino acids (BCAA). Catalyzes an alkyl-migration followed by a ketol-acid reduction of (S)-2-acetolactate (S2AL) to yield (R)-2,3-dihydroxy-isovalerate. In the isomerase reaction, S2AL is rearranged via a Mg-dependent methyl migration to produce 3-hydroxy-3-methyl-2-ketobutyrate (HMKB). In the reductase reaction, this 2-ketoacid undergoes a metal-dependent reduction by NADPH to yield (R)-2,3-dihydroxy-isovalerate. The sequence is that of Ketol-acid reductoisomerase (NADP(+)) from Corynebacterium glutamicum (strain ATCC 13032 / DSM 20300 / JCM 1318 / BCRC 11384 / CCUG 27702 / LMG 3730 / NBRC 12168 / NCIMB 10025 / NRRL B-2784 / 534).